Here is a 363-residue protein sequence, read N- to C-terminus: MVDHAPFETDISTLTRFVLEEGRKAGGTGEMTQLLNSLCTAIKAISSAVRQAGIAQLYGIAGSTNVTGDQVKKLDILSNDLVINMLKSSYATCVLVSEEDTHAIIIEPEKRGKYVVCFDPLDGSSNIDCLASIGTIFGIYRKTSANEPSEKDALQPGRNLVAAGYALYGSATMLVLAMNCGVNCFMLDPSIGEFILVDRDVKIKKKGNIYSINEGYAKDFDPAINEYIQRKKFPPDNSAPYGARYVGSMVADVHRTLVYGGIFLYPANKKNPSGKLRLLYECNPIAYVMEKAGGLATTGNEDILDIVPTEIHQKAPVIMGSTEDVQEFLEIYNKDKAKSRPSLPLPQSRARESPVHSICDELF.

Valine 2 bears the N-acetylvaline mark. AMP-binding positions include 18 to 22 (VLEEG) and 28 to 32 (TGEMT). Residues aspartate 69 and glutamate 98 each coordinate Mg(2+). 113-114 (KY) contacts AMP. Mg(2+) is bound by residues aspartate 119, leucine 121, and aspartate 122. 122 to 125 (DGSS) serves as a coordination point for substrate. Arginine 141 serves as a coordination point for AMP. At lysine 151 the chain carries N6-succinyllysine. Residues 213 to 216 (NEGY), 244 to 249 (RYVGSM), tyrosine 265, and 275 to 277 (KLR) contribute to the substrate site. Tyrosine 216, tyrosine 245, and tyrosine 265 each carry phosphotyrosine. Glutamate 281 provides a ligand contact to Mg(2+). Residues serine 339 and serine 353 each carry the phosphoserine modification.

It belongs to the FBPase class 1 family. As to quaternary structure, homotetramer. Mg(2+) serves as cofactor.

The enzyme catalyses beta-D-fructose 1,6-bisphosphate + H2O = beta-D-fructose 6-phosphate + phosphate. The protein operates within carbohydrate biosynthesis; gluconeogenesis. Its activity is regulated as follows. Subject to complex allosteric regulation. The enzyme can assume an active R-state, or an inactive T-state. Intermediate conformations may exist. AMP acts as an allosteric inhibitor. AMP binding affects the turnover of bound substrate and not the affinity for substrate. Fructose 2,6-bisphosphate acts as a competitive inhibitor. Fructose 2,6-bisphosphate and AMP have synergistic effects. Its function is as follows. Catalyzes the hydrolysis of fructose 1,6-bisphosphate to fructose 6-phosphate in the presence of divalent cations, acting as a rate-limiting enzyme in gluconeogenesis. Plays a role in regulating glucose sensing and insulin secretion of pancreatic beta-cells. Appears to modulate glycerol gluconeogenesis in liver. Important regulator of appetite and adiposity; increased expression of the protein in liver after nutrient excess increases circulating satiety hormones and reduces appetite-stimulating neuropeptides and thus seems to provide a feedback mechanism to limit weight gain. This Rattus norvegicus (Rat) protein is Fructose-1,6-bisphosphatase 1 (Fbp1).